Reading from the N-terminus, the 744-residue chain is Elongation factor G, mitochondrial (744 aa).

A mitochondrion-targeting transit peptide spans 1–33 (MTISNLIRSRCSLAAAKSFLENVKSFSSHATFA). One can recognise a tr-type G domain in the interval 39–317 (EKIRNIGISA…VLDYLPHPGE (279 aa)). GTP is bound by residues 48–55 (AHIDSGKT), 115–119 (DTPGH), and 169–172 (NKLD).

It belongs to the TRAFAC class translation factor GTPase superfamily. Classic translation factor GTPase family. EF-G/EF-2 subfamily.

It localises to the mitochondrion. The protein operates within protein biosynthesis; polypeptide chain elongation. In terms of biological role, mitochondrial GTPase that catalyzes the GTP-dependent ribosomal translocation step during translation elongation. During this step, the ribosome changes from the pre-translocational (PRE) to the post-translocational (POST) state as the newly formed A-site-bound peptidyl-tRNA and P-site-bound deacylated tRNA move to the P and E sites, respectively. Catalyzes the coordinated movement of the two tRNA molecules, the mRNA and conformational changes in the ribosome. This is Elongation factor G, mitochondrial from Anopheles gambiae (African malaria mosquito).